Consider the following 206-residue polypeptide: dITP/XTP pyrophosphatase (206 aa).

7–12 is a binding site for substrate; the sequence is TSNKDK. D74 (proton acceptor) is an active-site residue. D74 is a binding site for Mg(2+). Residues S75, 159–162, K182, and 187–188 each bind substrate; these read FGYD and HR.

Belongs to the HAM1 NTPase family. Homodimer. It depends on Mg(2+) as a cofactor.

It carries out the reaction XTP + H2O = XMP + diphosphate + H(+). The enzyme catalyses dITP + H2O = dIMP + diphosphate + H(+). It catalyses the reaction ITP + H2O = IMP + diphosphate + H(+). Its function is as follows. Pyrophosphatase that catalyzes the hydrolysis of nucleoside triphosphates to their monophosphate derivatives, with a high preference for the non-canonical purine nucleotides XTP (xanthosine triphosphate), dITP (deoxyinosine triphosphate) and ITP. Seems to function as a house-cleaning enzyme that removes non-canonical purine nucleotides from the nucleotide pool, thus preventing their incorporation into DNA/RNA and avoiding chromosomal lesions. This chain is dITP/XTP pyrophosphatase, found in Campylobacter hominis (strain ATCC BAA-381 / DSM 21671 / CCUG 45161 / LMG 19568 / NCTC 13146 / CH001A).